A 191-amino-acid chain; its full sequence is Guanylate kinase (191 aa).

One can recognise a Guanylate kinase-like domain in the interval 4–182; it reads GRLIVVSGPS…AREEMIEIMR (179 aa). ATP is bound at residue 11–18; it reads GPSGAGKS.

Belongs to the guanylate kinase family.

The protein localises to the cytoplasm. The catalysed reaction is GMP + ATP = GDP + ADP. Functionally, essential for recycling GMP and indirectly, cGMP. The sequence is that of Guanylate kinase from Rubrobacter xylanophilus (strain DSM 9941 / JCM 11954 / NBRC 16129 / PRD-1).